The chain runs to 328 residues: Malate dehydrogenase (328 aa).

Residue 12–18 coordinates NAD(+); sequence GAAGQIG. The substrate site is built by R92 and R98. Residues N105, Q112, and 129 to 131 contribute to the NAD(+) site; that span reads TGN. Residues N131 and R162 each contribute to the substrate site. Residue H187 is the Proton acceptor of the active site.

The protein belongs to the LDH/MDH superfamily. MDH type 2 family.

It catalyses the reaction (S)-malate + NAD(+) = oxaloacetate + NADH + H(+). Functionally, catalyzes the reversible oxidation of malate to oxaloacetate. In Nocardioides sp. (strain ATCC BAA-499 / JS614), this protein is Malate dehydrogenase.